A 424-amino-acid polypeptide reads, in one-letter code: Histidine--tRNA ligase (424 aa).

Belongs to the class-II aminoacyl-tRNA synthetase family. In terms of assembly, homodimer.

It is found in the cytoplasm. It carries out the reaction tRNA(His) + L-histidine + ATP = L-histidyl-tRNA(His) + AMP + diphosphate + H(+). This chain is Histidine--tRNA ligase, found in Salmonella dublin (strain CT_02021853).